Consider the following 707-residue polypeptide: Transcription termination factor Rho (707 aa).

2 disordered regions span residues 1-38 (MSDT…RRGT) and 76-321 (QAAG…DEIQ). Composition is skewed to low complexity over residues 16–31 (AAAP…TGAG) and 76–93 (QAAG…ADTA). Basic and acidic residues predominate over residues 107–132 (RTGDEAPAEKAEKAGKADKKADKAAA). Over residues 153–163 (ASAEQAAPADD) the composition is skewed to low complexity. Over residues 176–188 (DAGSPSATDTTVA) the composition is skewed to polar residues. Residues 203 to 213 (QQSQGHQQGQG) are compositionally biased toward low complexity. The segment covering 215–265 (ARSDAEGGDGRRRDRRDRGDRDRGDRGDRGDRGDRGDRGERGRDRRNKGDD) has biased composition (basic and acidic residues). The segment covering 301-315 (RRGRRGRYRDRRGRR) has biased composition (basic residues). The region spanning 331–406 (LIPVAGILDI…VRLDSVNGMA (76 aa)) is the Rho RNA-BD domain. ATP contacts are provided by residues 449–454 (GKGQRG), 461–466 (KTGKTM), and R492.

It belongs to the Rho family. As to quaternary structure, homohexamer. The homohexamer assembles into an open ring structure.

Its function is as follows. Facilitates transcription termination by a mechanism that involves Rho binding to the nascent RNA, activation of Rho's RNA-dependent ATPase activity, and release of the mRNA from the DNA template. This chain is Transcription termination factor Rho, found in Streptomyces lividans.